The primary structure comprises 198 residues: Inosine triphosphate pyrophosphatase (198 aa).

Position 2 is an N-acetylalanine (Ala2). 14–19 (TGNAKK) is a binding site for ITP. Position 44 (Glu44) interacts with Mg(2+). ITP-binding positions include Lys56, 72–73 (DT), and Lys89. Residue Ser146 is modified to Phosphoserine. ITP-binding positions include 149–152 (FGWD), Lys172, and 177–178 (HR).

This sequence belongs to the HAM1 NTPase family. As to quaternary structure, homodimer. It depends on Mg(2+) as a cofactor. Mn(2+) serves as cofactor.

Its subcellular location is the cytoplasm. The catalysed reaction is ITP + H2O = IMP + diphosphate + H(+). The enzyme catalyses dITP + H2O = dIMP + diphosphate + H(+). It carries out the reaction XTP + H2O = XMP + diphosphate + H(+). It catalyses the reaction N(6)-hydroxy-dATP + H2O = N(6)-hydroxy-dAMP + diphosphate + H(+). Functionally, pyrophosphatase that hydrolyzes the non-canonical purine nucleotides inosine triphosphate (ITP), deoxyinosine triphosphate (dITP) as well as 2'-deoxy-N-6-hydroxylaminopurine triphosphate (dHAPTP) and xanthosine 5'-triphosphate (XTP) to their respective monophosphate derivatives. The enzyme does not distinguish between the deoxy- and ribose forms. Probably excludes non-canonical purines from RNA and DNA precursor pools, thus preventing their incorporation into RNA and DNA and avoiding chromosomal lesions. In Rattus norvegicus (Rat), this protein is Inosine triphosphate pyrophosphatase (Itpa).